The following is a 293-amino-acid chain: Ribosomal protein L11 methyltransferase (293 aa).

S-adenosyl-L-methionine contacts are provided by Thr-145, Gly-166, Asp-188, and Asn-230.

This sequence belongs to the methyltransferase superfamily. PrmA family.

It localises to the cytoplasm. It catalyses the reaction L-lysyl-[protein] + 3 S-adenosyl-L-methionine = N(6),N(6),N(6)-trimethyl-L-lysyl-[protein] + 3 S-adenosyl-L-homocysteine + 3 H(+). Methylates ribosomal protein L11. This chain is Ribosomal protein L11 methyltransferase, found in Klebsiella pneumoniae (strain 342).